The sequence spans 282 residues: MRLFKKRNTISERHVKANKRAEDLVPSGLMKRCPNCGLEFFARRLDKYKTCPDCDYGFRLTARERLAWLCEESEEWFKDIQPSDPLHFPNYEAKVAAGKKKTGLNEAVWTGLAKIGGQETALAIMDPFFIMGSLGQMTGEKLTRLIEAATEKRLPVVVFTASGGARMQEGIYSLMQMAKVVNAINRHKAAGLLYLVVLTDPTTGGVTASFASEGDITLAEAHAMVAFAGRRVIEQTIHEQLPKDAQRAETVLKHGFIDRIVLRQEEKETLAWLLKYGGMQDD.

The CoA carboxyltransferase N-terminal domain occupies 29-282; sequence LMKRCPNCGL…LLKYGGMQDD (254 aa). 4 residues coordinate Zn(2+): Cys-33, Cys-36, Cys-51, and Cys-54. A C4-type zinc finger spans residues 33 to 54; the sequence is CPNCGLEFFARRLDKYKTCPDC.

The protein belongs to the AccD/PCCB family. Acetyl-CoA carboxylase is a heterohexamer composed of biotin carboxyl carrier protein (AccB), biotin carboxylase (AccC) and two subunits each of ACCase subunit alpha (AccA) and ACCase subunit beta (AccD). Zn(2+) serves as cofactor.

The protein localises to the cytoplasm. The catalysed reaction is N(6)-carboxybiotinyl-L-lysyl-[protein] + acetyl-CoA = N(6)-biotinyl-L-lysyl-[protein] + malonyl-CoA. Its pathway is lipid metabolism; malonyl-CoA biosynthesis; malonyl-CoA from acetyl-CoA: step 1/1. In terms of biological role, component of the acetyl coenzyme A carboxylase (ACC) complex. Biotin carboxylase (BC) catalyzes the carboxylation of biotin on its carrier protein (BCCP) and then the CO(2) group is transferred by the transcarboxylase to acetyl-CoA to form malonyl-CoA. The chain is Acetyl-coenzyme A carboxylase carboxyl transferase subunit beta from Lactobacillus delbrueckii subsp. bulgaricus (strain ATCC 11842 / DSM 20081 / BCRC 10696 / JCM 1002 / NBRC 13953 / NCIMB 11778 / NCTC 12712 / WDCM 00102 / Lb 14).